The following is a 222-amino-acid chain: Ribosomal RNA small subunit methyltransferase G (222 aa).

Residues G84, F89, 141-142 (VE), and R154 contribute to the S-adenosyl-L-methionine site.

Belongs to the methyltransferase superfamily. RNA methyltransferase RsmG family.

Its subcellular location is the cytoplasm. The catalysed reaction is guanosine(527) in 16S rRNA + S-adenosyl-L-methionine = N(7)-methylguanosine(527) in 16S rRNA + S-adenosyl-L-homocysteine. Functionally, specifically methylates the N7 position of guanine in position 527 of 16S rRNA. This Bradyrhizobium sp. (strain ORS 278) protein is Ribosomal RNA small subunit methyltransferase G.